The primary structure comprises 459 residues: Bifunctional protein GlmU (459 aa).

The pyrophosphorylase stretch occupies residues Met1–Arg229. Residues Leu8–Gly11, Lys22, Gln72, and Gly77–Thr78 each bind UDP-N-acetyl-alpha-D-glucosamine. Asp102 lines the Mg(2+) pocket. The UDP-N-acetyl-alpha-D-glucosamine site is built by Gly139, Glu154, Asn169, and Asn227. Asn227 contacts Mg(2+). Positions Val230–Asn250 are linker. The N-acetyltransferase stretch occupies residues Gly251–Lys459. Positions 332 and 350 each coordinate UDP-N-acetyl-alpha-D-glucosamine. His362 functions as the Proton acceptor in the catalytic mechanism. Tyr365 and Asn376 together coordinate UDP-N-acetyl-alpha-D-glucosamine. Residues Ala379, Asn385–Tyr386, Ser404, Ala422, and Arg439 each bind acetyl-CoA.

This sequence in the N-terminal section; belongs to the N-acetylglucosamine-1-phosphate uridyltransferase family. In the C-terminal section; belongs to the transferase hexapeptide repeat family. Homotrimer. It depends on Mg(2+) as a cofactor.

Its subcellular location is the cytoplasm. The enzyme catalyses alpha-D-glucosamine 1-phosphate + acetyl-CoA = N-acetyl-alpha-D-glucosamine 1-phosphate + CoA + H(+). It catalyses the reaction N-acetyl-alpha-D-glucosamine 1-phosphate + UTP + H(+) = UDP-N-acetyl-alpha-D-glucosamine + diphosphate. The protein operates within nucleotide-sugar biosynthesis; UDP-N-acetyl-alpha-D-glucosamine biosynthesis; N-acetyl-alpha-D-glucosamine 1-phosphate from alpha-D-glucosamine 6-phosphate (route II): step 2/2. It functions in the pathway nucleotide-sugar biosynthesis; UDP-N-acetyl-alpha-D-glucosamine biosynthesis; UDP-N-acetyl-alpha-D-glucosamine from N-acetyl-alpha-D-glucosamine 1-phosphate: step 1/1. It participates in bacterial outer membrane biogenesis; LPS lipid A biosynthesis. In terms of biological role, catalyzes the last two sequential reactions in the de novo biosynthetic pathway for UDP-N-acetylglucosamine (UDP-GlcNAc). The C-terminal domain catalyzes the transfer of acetyl group from acetyl coenzyme A to glucosamine-1-phosphate (GlcN-1-P) to produce N-acetylglucosamine-1-phosphate (GlcNAc-1-P), which is converted into UDP-GlcNAc by the transfer of uridine 5-monophosphate (from uridine 5-triphosphate), a reaction catalyzed by the N-terminal domain. The protein is Bifunctional protein GlmU of Streptococcus sanguinis (strain SK36).